Reading from the N-terminus, the 354-residue chain is Uroporphyrinogen decarboxylase (354 aa).

Residues 27–31 (RQAGR), aspartate 77, tyrosine 154, threonine 209, and histidine 327 contribute to the substrate site.

This sequence belongs to the uroporphyrinogen decarboxylase family. As to quaternary structure, homodimer.

The protein resides in the cytoplasm. The catalysed reaction is uroporphyrinogen III + 4 H(+) = coproporphyrinogen III + 4 CO2. It functions in the pathway porphyrin-containing compound metabolism; protoporphyrin-IX biosynthesis; coproporphyrinogen-III from 5-aminolevulinate: step 4/4. Its function is as follows. Catalyzes the decarboxylation of four acetate groups of uroporphyrinogen-III to yield coproporphyrinogen-III. The polypeptide is Uroporphyrinogen decarboxylase (Pseudomonas putida (strain ATCC 700007 / DSM 6899 / JCM 31910 / BCRC 17059 / LMG 24140 / F1)).